The sequence spans 128 residues: Large ribosomal subunit protein bL17 (128 aa).

The protein belongs to the bacterial ribosomal protein bL17 family. Part of the 50S ribosomal subunit. Contacts protein L32.

This is Large ribosomal subunit protein bL17 from Histophilus somni (strain 129Pt) (Haemophilus somnus).